The chain runs to 92 residues: Small ribosomal subunit protein uS19 (92 aa).

It belongs to the universal ribosomal protein uS19 family.

In terms of biological role, protein S19 forms a complex with S13 that binds strongly to the 16S ribosomal RNA. The protein is Small ribosomal subunit protein uS19 (rpsS) of Geobacillus stearothermophilus (Bacillus stearothermophilus).